The following is a 446-amino-acid chain: Tetratricopeptide repeat protein 23 (446 aa).

TPR repeat units follow at residues 45-78 (LRLS…TRIC), 137-170 (VELF…SKEM), 186-219 (ARIK…TEIS), 310-347 (TAKF…KVAV), and 356-389 (AETY…QTLL). A disordered region spans residues 410 to 446 (APEVPARPRPSPGAKAAFCAGGRPYSVPGRTRPSAAD).

As to quaternary structure, associated with the EvC complex composed of EFCAB7, IQCE, EVC2 and EVC.

The protein localises to the cell projection. Its subcellular location is the cilium. In terms of biological role, participates positively in the ciliary Hedgehog (Hh) signaling. The sequence is that of Tetratricopeptide repeat protein 23 (TTC23) from Bos taurus (Bovine).